The primary structure comprises 248 residues: N-acylneuraminate-9-phosphatase (248 aa).

Position 12 (Asp-12) interacts with Mg(2+). Phosphate is bound by residues Leu-13, Asp-14, Thr-131, Asn-132, and Lys-164. Asp-14 lines the Mg(2+) pocket. Position 189 (Asp-189) interacts with Mg(2+).

Belongs to the HAD-like hydrolase superfamily. NANP family. The cofactor is Mg(2+).

It catalyses the reaction N-acetylneuraminate 9-phosphate + H2O = N-acetylneuraminate + phosphate. It carries out the reaction N-glycoloylneuraminate 9-phosphate + H2O = N-glycoloylneuraminate + phosphate. The protein operates within amino-sugar metabolism; N-acetylneuraminate biosynthesis. Its activity is regulated as follows. Inhibited by calcium. Inhibited by vanadate, sodium orthovanate and phosphonate. Functionally, catalyzes the dephosphorylation of N-acylneuraminate 9-phosphate (Neu5Ac-9-P) to sialic acid N-acetylneuraminic acid (Neu5Ac). May also use N-glycoloylneuraminate 9-phosphate as substrate. This chain is N-acylneuraminate-9-phosphatase, found in Mus musculus (Mouse).